The chain runs to 144 residues: Large ribosomal subunit protein uL15 (144 aa).

The disordered stretch occupies residues 1–52 (MIKLESLQDPSPRKRRKKLLGRGPGSGHGKTSGRGHKGDGSRSGYKRRFGYE). Over residues 22–32 (RGPGSGHGKTS) the composition is skewed to gly residues.

Belongs to the universal ribosomal protein uL15 family. Part of the 50S ribosomal subunit.

Its function is as follows. Binds to the 23S rRNA. The sequence is that of Large ribosomal subunit protein uL15 from Chlamydia felis (strain Fe/C-56) (Chlamydophila felis).